We begin with the raw amino-acid sequence, 104 residues long: UPF0134 protein MPN_104 (104 aa).

This sequence belongs to the UPF0134 family.

The chain is UPF0134 protein MPN_104 from Mycoplasma pneumoniae (strain ATCC 29342 / M129 / Subtype 1) (Mycoplasmoides pneumoniae).